A 363-amino-acid polypeptide reads, in one-letter code: MSAIYNFCAGPAMLPAAVMKKAQQELLDWNGLGVSVMEVSHRGKEFIALTKQAEADLRELMHIPQNYHVLFMHGGGRGQFSAVVNNFLGNQGRALYLVSGQWSSAALAEAQKLAGDAQIDSLNIVEKQNGLNAVVLPDLHKIDADYRYVHYCPNETVDGIEIFDELDSPWPIVADLSSTIMSREIDVSRYGLIYAGAQKNIGPSGLSIVIVRDDMLKLPSLTQSSIMDYRLAVEHDSMFNTPPTFAWYLAAEVFAWLKSLGGVASIAKINQQKAQMLYACIDANPFYKNGVVAANRSQMNVTFQLADESLDGAFLKEAEAASLVALKGHRIVGGMRASLYNAMPLEGVAALVSFMNEFAAKHS.

R42 serves as a coordination point for L-glutamate. Pyridoxal 5'-phosphate contacts are provided by residues 76–77, W102, T156, D175, and Q198; that span reads GR. K199 carries the N6-(pyridoxal phosphate)lysine modification. 240–241 is a pyridoxal 5'-phosphate binding site; sequence NT.

This sequence belongs to the class-V pyridoxal-phosphate-dependent aminotransferase family. SerC subfamily. In terms of assembly, homodimer. The cofactor is pyridoxal 5'-phosphate.

Its subcellular location is the cytoplasm. The enzyme catalyses O-phospho-L-serine + 2-oxoglutarate = 3-phosphooxypyruvate + L-glutamate. The catalysed reaction is 4-(phosphooxy)-L-threonine + 2-oxoglutarate = (R)-3-hydroxy-2-oxo-4-phosphooxybutanoate + L-glutamate. The protein operates within amino-acid biosynthesis; L-serine biosynthesis; L-serine from 3-phospho-D-glycerate: step 2/3. It participates in cofactor biosynthesis; pyridoxine 5'-phosphate biosynthesis; pyridoxine 5'-phosphate from D-erythrose 4-phosphate: step 3/5. In terms of biological role, catalyzes the reversible conversion of 3-phosphohydroxypyruvate to phosphoserine and of 3-hydroxy-2-oxo-4-phosphonooxybutanoate to phosphohydroxythreonine. The polypeptide is Phosphoserine aminotransferase (Shewanella sp. (strain MR-7)).